The following is a 390-amino-acid chain: Nicotinate phosphoribosyltransferase (390 aa).

Histidine 211 is subject to Phosphohistidine; by autocatalysis.

It belongs to the NAPRTase family. Post-translationally, transiently phosphorylated on a His residue during the reaction cycle. Phosphorylation strongly increases the affinity for substrates and increases the rate of nicotinate D-ribonucleotide production. Dephosphorylation regenerates the low-affinity form of the enzyme, leading to product release.

The catalysed reaction is nicotinate + 5-phospho-alpha-D-ribose 1-diphosphate + ATP + H2O = nicotinate beta-D-ribonucleotide + ADP + phosphate + diphosphate. The protein operates within cofactor biosynthesis; NAD(+) biosynthesis; nicotinate D-ribonucleotide from nicotinate: step 1/1. Its function is as follows. Catalyzes the synthesis of beta-nicotinate D-ribonucleotide from nicotinate and 5-phospho-D-ribose 1-phosphate at the expense of ATP. This Chromohalobacter salexigens (strain ATCC BAA-138 / DSM 3043 / CIP 106854 / NCIMB 13768 / 1H11) protein is Nicotinate phosphoribosyltransferase.